We begin with the raw amino-acid sequence, 229 residues long: Dephospho-CoA kinase (229 aa).

The DPCK domain maps to 3 to 203; that stretch reads TVGLTGGIGS…ARRDAKATAK (201 aa). Residue 11 to 16 participates in ATP binding; it reads GSGKSA. The disordered stretch occupies residues 203–229; that stretch reads KATAKAETVASGTDTAASGTDTAAPAG.

This sequence belongs to the CoaE family.

The protein resides in the cytoplasm. It carries out the reaction 3'-dephospho-CoA + ATP = ADP + CoA + H(+). Its pathway is cofactor biosynthesis; coenzyme A biosynthesis; CoA from (R)-pantothenate: step 5/5. Its function is as follows. Catalyzes the phosphorylation of the 3'-hydroxyl group of dephosphocoenzyme A to form coenzyme A. This is Dephospho-CoA kinase from Frankia casuarinae (strain DSM 45818 / CECT 9043 / HFP020203 / CcI3).